Consider the following 706-residue polypeptide: K(+)-insensitive pyrophosphate-energized proton pump (706 aa).

Helical transmembrane passes span 1–21, 62–82, 83–103, 129–149, and 164–184; these read MTAL…AIWA, VVIF…GFAI, GAIL…RANV, LLVA…LIHF, and VALG…GGIF. Lys-186 contributes to the substrate binding site. Residues Asp-189, Asp-193, Asn-216, and Asp-219 each coordinate Mg(2+). Transmembrane regions (helical) follow at residues 231–251, 263–283, 300–320, 330–350, 393–413, and 414–434; these read LFET…IFFG, TLPL…TFFV, IATG…LIGF, GLAL…IIWI, IVII…GIAI, and ATTT…FGPV. Residue Asp-436 participates in Mg(2+) binding. A run of 4 helical transmembrane segments spans residues 467–487, 516–536, 585–605, and 616–636; these read AVTK…LFAA, YVVV…AMGM, IIPS…IYAI, and AFSA…FVAI. Positions 646, 672, and 676 each coordinate Ca(2+). Lys-679 serves as a coordination point for substrate. The chain crosses the membrane as a helical span at residues 685–705; that stretch reads AVNPMIKITNIVALLLLAILA.

This sequence belongs to the H(+)-translocating pyrophosphatase (TC 3.A.10) family. K(+)-insensitive subfamily. As to quaternary structure, homodimer. Mg(2+) is required as a cofactor.

The protein localises to the cell inner membrane. It catalyses the reaction diphosphate + H2O + H(+)(in) = 2 phosphate + 2 H(+)(out). Functionally, proton pump that utilizes the energy of pyrophosphate hydrolysis as the driving force for proton movement across the membrane. Generates a proton motive force. The sequence is that of K(+)-insensitive pyrophosphate-energized proton pump from Rhodopseudomonas palustris (strain ATCC BAA-98 / CGA009).